A 914-amino-acid polypeptide reads, in one-letter code: Protein translocase subunit SecA (914 aa).

ATP is bound by residues Q86, G104–T108, and D512. The Zn(2+) site is built by C898, C900, C909, and H910.

The protein belongs to the SecA family. In terms of assembly, monomer and homodimer. Part of the essential Sec protein translocation apparatus which comprises SecA, SecYEG and auxiliary proteins SecDF-YajC and YidC. Requires Zn(2+) as cofactor.

Its subcellular location is the cell inner membrane. The protein resides in the cytoplasm. It catalyses the reaction ATP + H2O + cellular proteinSide 1 = ADP + phosphate + cellular proteinSide 2.. Functionally, part of the Sec protein translocase complex. Interacts with the SecYEG preprotein conducting channel. Has a central role in coupling the hydrolysis of ATP to the transfer of proteins into and across the cell membrane, serving both as a receptor for the preprotein-SecB complex and as an ATP-driven molecular motor driving the stepwise translocation of polypeptide chains across the membrane. In Bordetella petrii (strain ATCC BAA-461 / DSM 12804 / CCUG 43448), this protein is Protein translocase subunit SecA.